Here is a 242-residue protein sequence, read N- to C-terminus: Endoglucanase-5 (242 aa).

Positions 1-17 (MKATLVLGSLIVGAVSA) are cleaved as a signal peptide. Residues 18 to 182 (YKATTTRYYD…ETDPTPVLGN (165 aa)) form a catalytic region. Residue Asp-27 is the Nucleophile of the active site. Asp-134 acts as the Proton donor in catalysis. The segment at 177 to 206 (TPVLGNDTGSTPPGSSPPATSSSPPSGGGQ) is disordered. N-linked (GlcNAc...) asparagine glycosylation occurs at Asn-182. A compositionally biased stretch (low complexity) spans 184–201 (TGSTPPGSSPPATSSSPP). The CBM1 domain maps to 205–241 (GQQTLYGQCGGAGWTGPTTCQAPGTCKVQNQWYSQCL). Disulfide bonds link Cys-213–Cys-230 and Cys-224–Cys-240.

This sequence belongs to the glycosyl hydrolase 45 (cellulase K) family.

The enzyme catalyses Endohydrolysis of (1-&gt;4)-beta-D-glucosidic linkages in cellulose, lichenin and cereal beta-D-glucans.. This chain is Endoglucanase-5 (egl5), found in Hypocrea jecorina (Trichoderma reesei).